Consider the following 637-residue polypeptide: 3D-(3,5/4)-trihydroxycyclohexane-1,2-dione hydrolase (637 aa).

E65 contributes to the thiamine diphosphate binding site. The thiamine pyrophosphate binding stretch occupies residues 441-521 (SLPGDLQRLW…INVLLFDNSG (81 aa)). Mg(2+) is bound by residues D492 and N519.

Belongs to the TPP enzyme family. The cofactor is Mg(2+). Thiamine diphosphate serves as cofactor.

It catalyses the reaction 3D-3,5/4-trihydroxycyclohexane-1,2-dione + H2O = 5-deoxy-D-glucuronate + H(+). Its pathway is polyol metabolism; myo-inositol degradation into acetyl-CoA; acetyl-CoA from myo-inositol: step 3/7. In terms of biological role, involved in the cleavage of the C1-C2 bond of 3D-(3,5/4)-trihydroxycyclohexane-1,2-dione (THcHDO) to yield 5-deoxy-glucuronate (5DG). This Halalkalibacterium halodurans (strain ATCC BAA-125 / DSM 18197 / FERM 7344 / JCM 9153 / C-125) (Bacillus halodurans) protein is 3D-(3,5/4)-trihydroxycyclohexane-1,2-dione hydrolase.